The primary structure comprises 444 residues: Glutamate-1-semialdehyde 2,1-aminomutase (444 aa).

N6-(pyridoxal phosphate)lysine is present on Lys-267.

Belongs to the class-III pyridoxal-phosphate-dependent aminotransferase family. HemL subfamily. In terms of assembly, homodimer. It depends on pyridoxal 5'-phosphate as a cofactor.

The protein resides in the cytoplasm. The catalysed reaction is (S)-4-amino-5-oxopentanoate = 5-aminolevulinate. Its pathway is porphyrin-containing compound metabolism; protoporphyrin-IX biosynthesis; 5-aminolevulinate from L-glutamyl-tRNA(Glu): step 2/2. In Xylella fastidiosa (strain M12), this protein is Glutamate-1-semialdehyde 2,1-aminomutase.